A 117-amino-acid polypeptide reads, in one-letter code: Large ribosomal subunit protein bL20 (117 aa).

Belongs to the bacterial ribosomal protein bL20 family.

Binds directly to 23S ribosomal RNA and is necessary for the in vitro assembly process of the 50S ribosomal subunit. It is not involved in the protein synthesizing functions of that subunit. This chain is Large ribosomal subunit protein bL20, found in Campylobacter jejuni subsp. jejuni serotype O:2 (strain ATCC 700819 / NCTC 11168).